The primary structure comprises 1293 residues: Phosphoribosylformylglycinamidine synthase (1293 aa).

ATP is bound by residues 305–316 (GAATGSGGEIRD), 384–386 (TGY), and Ala-676. The segment at 307 to 326 (ATGSGGEIRDEGATGRGSKP) is disordered. Mg(2+) contacts are provided by Asp-677, Glu-716, Asn-720, and Asp-884. Position 886 (Ser-886) interacts with ATP. The 254-residue stretch at 1040–1293 (MAILREQGVN…MFRNARVKIG (254 aa)) folds into the Glutamine amidotransferase type-1 domain. The Nucleophile role is filled by Cys-1133. Active-site residues include His-1258 and Glu-1260.

This sequence in the N-terminal section; belongs to the FGAMS family. Monomer.

It is found in the cytoplasm. The enzyme catalyses N(2)-formyl-N(1)-(5-phospho-beta-D-ribosyl)glycinamide + L-glutamine + ATP + H2O = 2-formamido-N(1)-(5-O-phospho-beta-D-ribosyl)acetamidine + L-glutamate + ADP + phosphate + H(+). The protein operates within purine metabolism; IMP biosynthesis via de novo pathway; 5-amino-1-(5-phospho-D-ribosyl)imidazole from N(2)-formyl-N(1)-(5-phospho-D-ribosyl)glycinamide: step 1/2. Its function is as follows. Phosphoribosylformylglycinamidine synthase involved in the purines biosynthetic pathway. Catalyzes the ATP-dependent conversion of formylglycinamide ribonucleotide (FGAR) and glutamine to yield formylglycinamidine ribonucleotide (FGAM) and glutamate. This is Phosphoribosylformylglycinamidine synthase from Shewanella frigidimarina (strain NCIMB 400).